A 94-amino-acid chain; its full sequence is Pyrimidine/purine nucleoside phosphorylase (94 aa).

The protein belongs to the nucleoside phosphorylase PpnP family.

It catalyses the reaction a purine D-ribonucleoside + phosphate = a purine nucleobase + alpha-D-ribose 1-phosphate. The enzyme catalyses adenosine + phosphate = alpha-D-ribose 1-phosphate + adenine. It carries out the reaction cytidine + phosphate = cytosine + alpha-D-ribose 1-phosphate. The catalysed reaction is guanosine + phosphate = alpha-D-ribose 1-phosphate + guanine. It catalyses the reaction inosine + phosphate = alpha-D-ribose 1-phosphate + hypoxanthine. The enzyme catalyses thymidine + phosphate = 2-deoxy-alpha-D-ribose 1-phosphate + thymine. It carries out the reaction uridine + phosphate = alpha-D-ribose 1-phosphate + uracil. The catalysed reaction is xanthosine + phosphate = alpha-D-ribose 1-phosphate + xanthine. In terms of biological role, catalyzes the phosphorolysis of diverse nucleosides, yielding D-ribose 1-phosphate and the respective free bases. Can use uridine, adenosine, guanosine, cytidine, thymidine, inosine and xanthosine as substrates. Also catalyzes the reverse reactions. In Pseudomonas fluorescens (strain ATCC BAA-477 / NRRL B-23932 / Pf-5), this protein is Pyrimidine/purine nucleoside phosphorylase.